The following is a 110-amino-acid chain: U1-lycotoxin-Ls1aa (110 aa).

The signal sequence occupies residues 1–20; it reads MKFVLLFGVLLVTLFSYSSA. A propeptide spanning residues 21 to 44 is cleaved from the precursor; sequence EMLDDFDQADEDELLSLIEKEEAR. Cystine bridges form between Cys47-Cys62, Cys54-Cys71, Cys61-Cys89, and Cys73-Cys87.

It belongs to the neurotoxin 19 (CSTX) family. 03 subfamily. Expressed by the venom gland.

It localises to the secreted. The protein is U1-lycotoxin-Ls1aa of Lycosa singoriensis (Wolf spider).